The primary structure comprises 257 residues: 5-oxoprolinase subunit A (257 aa).

It belongs to the LamB/PxpA family. Forms a complex composed of PxpA, PxpB and PxpC.

It catalyses the reaction 5-oxo-L-proline + ATP + 2 H2O = L-glutamate + ADP + phosphate + H(+). Its function is as follows. Catalyzes the cleavage of 5-oxoproline to form L-glutamate coupled to the hydrolysis of ATP to ADP and inorganic phosphate. This chain is 5-oxoprolinase subunit A, found in Fusobacterium nucleatum subsp. nucleatum (strain ATCC 25586 / DSM 15643 / BCRC 10681 / CIP 101130 / JCM 8532 / KCTC 2640 / LMG 13131 / VPI 4355).